The following is a 97-amino-acid chain: Co-chaperonin GroES (97 aa).

This sequence belongs to the GroES chaperonin family. As to quaternary structure, heptamer of 7 subunits arranged in a ring. Interacts with the chaperonin GroEL.

The protein localises to the cytoplasm. In terms of biological role, together with the chaperonin GroEL, plays an essential role in assisting protein folding. The GroEL-GroES system forms a nano-cage that allows encapsulation of the non-native substrate proteins and provides a physical environment optimized to promote and accelerate protein folding. GroES binds to the apical surface of the GroEL ring, thereby capping the opening of the GroEL channel. This chain is Co-chaperonin GroES, found in Buchnera aphidicola subsp. Tuberolachnus salignus.